The sequence spans 87 residues: HssA/B-like protein 18 (87 aa).

Belongs to the hssA/B family.

The polypeptide is HssA/B-like protein 18 (hssl18) (Dictyostelium discoideum (Social amoeba)).